We begin with the raw amino-acid sequence, 641 residues long: Probable potassium transport system protein Kup (641 aa).

12 consecutive transmembrane segments (helical) span residues 29-49 (ISLAALGVVFGDIGTSPLYAI), 66-86 (ILGVLSLLFWALILIVSLKYL), 119-139 (WVLVSIGLFGASVLLGEAMIT), 156-176 (PAFADMVIPATVVILAGLFLF), 185-205 (GALFGPIILLWFFCLGTLGII), 231-251 (LHGFLVLGAVFLAVTGAEALY), 266-286 (WVLFVLPALLLNYFGQGAFLL), 298-318 (ALVPSWAMIPMVLLATVATVI), 356-376 (IYVPAANWALMAATIGLVLGF), 384-404 (AAYGASMTTTMLISTILFFFV), 415-435 (VLWALVSLFAVVDLSFFGASM), and 438-458 (LFHGAWFPLAVGLLMFTLMNT).

Belongs to the HAK/KUP transporter (TC 2.A.72) family.

The protein localises to the cell inner membrane. It catalyses the reaction K(+)(in) + H(+)(in) = K(+)(out) + H(+)(out). Transport of potassium into the cell. Likely operates as a K(+):H(+) symporter. The protein is Probable potassium transport system protein Kup of Chlorobium phaeovibrioides (strain DSM 265 / 1930) (Prosthecochloris vibrioformis (strain DSM 265)).